Consider the following 198-residue polypeptide: Virion membrane protein A17 precursor homolog (198 aa).

Residues 1–55 (MDNNYLNYYNVFEEFDAGAGIKEKELFTEEQQLSFLPKKGLGNGGFDGVERLYSN) lie on the Virion surface side of the membrane. Residues 56–76 (IINNNDIKSLLALIMLVFAIN) form a helical membrane-spanning segment. The Intravirion portion of the chain corresponds to 77-145 (TNSLVALIFI…TSKISKGFKR (69 aa)). Residues 146–166 (AIDVVLLVILGFYIVKIYGID) form a helical membrane-spanning segment. The Virion surface segment spans residues 167-198 (RQISIPSRRYCRQMSGPSSLENLNAFQTHSNY). Phosphotyrosine is present on Y198.

It belongs to the chordopoxvirinae A17 family. Interacts (via N-terminus) with D13 scaffold; this interaction helps D13 to associate with membranes. Interacts with A14. Interacts with A27; this interaction allows A27 to be anchored in the mature virion (MV) membrane. Part of a complex composed of A17, A25, A26 and A27. In terms of processing, the 22 kDa precursor is probably cleaved by the I7 protease during virus maturation. Phosphorylated on tyrosine and threonine. Its phosphorylation state is regulated by the F10 kinase and the H1 phosphatase. Phosphorylation by F10 kinase seems to be required to form the membranes associated with IV.

It localises to the virion membrane. In terms of biological role, envelope protein which participates in virus morphogenesis. Needed for an early step in viral crescent membrane formation by interacting with D13 scaffold protein. Its interaction with D13 scaffold protein leads to the formation of rigid, crescent-shaped membranes that assemble around the cytoplasmic virus factory. Membrane anchor for the protein A27. A17-A27 virus envelope protein might be involved in fusion or attachment, and can further associate to A26. The chain is Virion membrane protein A17 precursor homolog from Fowlpox virus (strain NVSL) (FPV).